Reading from the N-terminus, the 329-residue chain is Phenylalanine--tRNA ligase alpha subunit (329 aa).

Glutamate 254 provides a ligand contact to Mg(2+).

It belongs to the class-II aminoacyl-tRNA synthetase family. Phe-tRNA synthetase alpha subunit type 1 subfamily. Tetramer of two alpha and two beta subunits. Requires Mg(2+) as cofactor.

It localises to the cytoplasm. It carries out the reaction tRNA(Phe) + L-phenylalanine + ATP = L-phenylalanyl-tRNA(Phe) + AMP + diphosphate + H(+). The polypeptide is Phenylalanine--tRNA ligase alpha subunit (Histophilus somni (strain 2336) (Haemophilus somnus)).